Reading from the N-terminus, the 1118-residue chain is Collagenase ColG (1118 aa).

The N-terminal stretch at 1-45 (MKKNILKILMDSYSKESKIQTVRRVTSVSLLAVYLTMNTSSLVLA) is a signal peptide. The propeptide occupies 46-110 (KPIENTNDTS…KSKSTLRSAS (65 aa)). Positions 111 to 786 (IANTNSEKYD…QYDVVFHGVL (676 aa)) are S1 metalloprotease domain, degrades both FALGPA (furylacryloyl-Leu-Gly-Pro-Ala) and type I collagen. The activator domain required for full activity on collagen stretch occupies residues 119–388 (YDFEYLNGLS…AMERITWDYD (270 aa)). The interval 389–670 (GIGSNGKKVD…IQELADKYQG (282 aa)) is catalytic subdomain. Positions 396–1118 (KVDHDKFLDD…SGNYELRVNK (723 aa)) are degrades soluble FALGPA peptide (furylacryloyl-Leu-Gly-Pro-Ala) but not type I collagen. Glutamate 498 contacts Ca(2+). Histidine 523 contributes to the Zn(2+) binding site. Residue glutamate 524 is part of the active site. Histidine 527 serves as a coordination point for Zn(2+). Positions 531, 535, and 537 each coordinate Ca(2+). Position 555 (glutamate 555) interacts with Zn(2+). A helper subdomain region spans residues 679–790 (DYLKDHGYKK…VFHGVLTDNA (112 aa)). The S2 domain stretch occupies residues 787–882 (TDNADISNNK…SFTIEIKNED (96 aa)). Residues asparagine 795, lysine 796, aspartate 823, aspartate 825, aspartate 864, glutamate 890, glutamate 892, asparagine 894, aspartate 913, aspartate 918, alanine 920, aspartate 921, glutamate 1009, glutamate 1011, asparagine 1013, aspartate 1014, serine 1032, aspartate 1037, arginine 1039, and aspartate 1040 each coordinate Ca(2+). In terms of domain architecture, PKD spans 797–885 (APIAKVTGPS…IEIKNEDTTT (89 aa)). The segment at 886–1003 (PITKEMEPND…SYSLNIKGLG (118 aa)) is S3a collagen-binding domain. Residues 1008–1118 (KEKENNDSSD…SGNYELRVNK (111 aa)) are S3b collagen-binding domain. Residues 1102–1106 (LVYKY) form a collagen-binding region.

Belongs to the peptidase M9B family. Collagenase subfamily. Requires Ca(2+) as cofactor. Zn(2+) is required as a cofactor. In terms of processing, upon purification gives 67 kDa, 78 kDa, 82 kDa and 116 kDa (full-length) proteins all of which have the same N-terminus; only the longest form digests insoluble collagen. At least 2 in vivo isolated forms (C1b and C1c) are missing the second collagen-binding domain, ending on Lys-1006 and Lys-1018 respectively.

Its subcellular location is the secreted. The enzyme catalyses Digestion of native collagen in the triple helical region at Xaa-|-Gly bonds. With synthetic peptides, a preference is shown for Gly at P3 and P1', Pro and Ala at P2 and P2', and hydroxyproline, Ala or Arg at P3'.. With respect to regulation, inhibited by 1-10-phenanthroline. Inhibited by peptidomimetic isoamyl-phosphonyl-Gly-Pro-Ala, which binds to Zn(2+). Inhibited by broad-spectrum zinc metalloprotease inhibitor batimastat. N-aryl mercaptoacetamide-based inhibitors have been isolated that act on clostridial collagenases with submicromolar affinity while having negligibile activity on human collagenases. In terms of biological role, clostridial collagenases are among the most efficient degraders of eukaryotic collagen known; saprophytes use collagen as a carbon source while pathogens additionally digest collagen to aid in host colonization. Has both tripeptidylcarboxypeptidase on Gly-X-Y and endopeptidase activities; the endopeptidase cuts within the triple helix region of collagen while tripeptidylcarboxypeptidase successively digests the exposed ends, thus clostridial collagenases can digest large sections of collagen. Active on soluble type I collagen, insoluble collagen, azocoll, soluble PZ-peptide (all collagenase substrates) and gelatin. The full-length protein has collagenase activity, while the in vivo derived C-terminally truncated shorter versions only act on gelatin. In vitro digestion of soluble calf skin collagen fibrils requires both ColG and ColH; ColG forms missing the second collagen-binding domain are also synergistic with ColH, although their overall efficiency is decreased. The activator domain (residues 119-388) and catalytic subdomain (389-670) open and close around substrate using a Gly-rich hinge (387-397), allowing digestion when the protein is closed. Binding of collagen requires Ca(2+) and is inhibited by EGTA; the collagen-binding domain (CBD, S3a plus S3b) specifically recognizes the triple-helical conformation made by 3 collagen protein chains in the triple-helical region. Isolated CBD (S3a plus S3b) binds collagen fibrils and sheets of many tissues. The sequence is that of Collagenase ColG from Hathewaya histolytica (Clostridium histolyticum).